The chain runs to 446 residues: Inward rectifier potassium channel 4 (446 aa).

At Met-1–Trp-55 the chain is on the cytoplasmic side. Residues Arg-56–Ile-80 form a helical membrane-spanning segment. The Extracellular portion of the chain corresponds to Ala-81–Gly-120. A val/Gly/Ala/Pro stretch region spans residues Pro-91 to Ala-111. An intramembrane region (helical; Pore-forming) is located at residues Phe-121–Gln-132. The pore-forming intramembrane region spans Thr-133 to Phe-139. The short motif at Thr-134–Phe-139 is the Selectivity filter element. Residues Arg-140–Leu-148 are Extracellular-facing. Residues Ala-149–Thr-170 traverse the membrane as a helical segment. The Cytoplasmic segment spans residues Ile-171 to Ile-446. A PDZ-binding motif is present at residues Ser-444 to Ile-446.

It belongs to the inward rectifier-type potassium channel (TC 1.A.2.1) family. KCNJ4 subfamily. As to quaternary structure, homomultimeric and heteromultimeric association with KCNJ2 and KCNJ12. Interacts with DLG2 and DLG4. Associates, via its PDZ-recognition domain, with a complex containing LIN7A, LIN7B, LIN7C, DLG1, CASK and APBA1. Interacts with TAX1BP3. TAX1BP3 competes with LIN7 family members for KCNJ4 binding. In terms of tissue distribution, detected in kidney distal convoluted tubules (at protein level). Widely expressed throughout the brain. Also found in some peripheral tissues.

The protein resides in the cell membrane. The protein localises to the cytoplasmic vesicle membrane. It is found in the postsynaptic cell membrane. It catalyses the reaction K(+)(in) = K(+)(out). Functionally, inward rectifier potassium channels are characterized by a greater tendency to allow potassium to flow into the cell rather than out of it. Their voltage dependence is regulated by the concentration of extracellular potassium; as external potassium is raised, the voltage range of the channel opening shifts to more positive voltages. The inward rectification is mainly due to the blockage of outward current by internal magnesium. Can be blocked by extracellular barium and cesium. The protein is Inward rectifier potassium channel 4 (Kcnj4) of Rattus norvegicus (Rat).